Consider the following 119-residue polypeptide: Large ribosomal subunit protein bL20c (119 aa).

The protein belongs to the bacterial ribosomal protein bL20 family.

Its subcellular location is the plastid. The protein resides in the chloroplast. Functionally, binds directly to 23S ribosomal RNA and is necessary for the in vitro assembly process of the 50S ribosomal subunit. It is not involved in the protein synthesizing functions of that subunit. The polypeptide is Large ribosomal subunit protein bL20c (Nandina domestica (Heavenly bamboo)).